A 742-amino-acid polypeptide reads, in one-letter code: Protein-lysine N-methyltransferase SMYD4 (742 aa).

110–112 (RSA) is a binding site for S-adenosyl-L-methionine. The SET domain maps to 230–569 (SSLSLNFSTE…SGQEIFHCYG (340 aa)). Zn(2+)-binding residues include C295, C298, C308, C311, C317, C321, H330, and C334. The MYND-type zinc-finger motif lies at 295–334 (CHHCLKQLLASIPCCGCSYAKYCSQNCADVAWEQYHRTEC). S-adenosyl-L-methionine is bound by residues N418, 534-535 (NH), and Y568.

This sequence belongs to the class V-like SAM-binding methyltransferase superfamily.

It is found in the nucleus. The protein resides in the cytoplasm. The catalysed reaction is L-lysyl-[protein] + S-adenosyl-L-methionine = N(6)-methyl-L-lysyl-[protein] + S-adenosyl-L-homocysteine + H(+). Its function is as follows. Protein-lysine N-methyltransferase. Monomethylates PRMT5, modulating its transcriptional activity. May also act as a histone methyltransferase. Plays a critical role in cardiac development. Acts as a key epigenetic regulator of gene expression during cardiac development via its dual activities as a methyltransferase and negative regulator of HDAC1. The polypeptide is Protein-lysine N-methyltransferase SMYD4 (SMYD4) (Gallus gallus (Chicken)).